The following is a 73-amino-acid chain: Lactogenin (73 aa).

At Gln-1 the chain carries Pyrrolidone carboxylic acid.

This sequence belongs to the pancreatic ribonuclease family. As to expression, milk.

Its subcellular location is the secreted. Secretory RNase specific towards pyrimidine bases, with higher activity towards poly C than poly U. Inhibits cell-free translation. This Bos taurus (Bovine) protein is Lactogenin.